The sequence spans 198 residues: Large ribosomal subunit protein bL12m (198 aa).

The transit peptide at 1-36 (MLPAAARPLWGPCLGLRAAAFRLARRQVPCVCAVRH) directs the protein to the mitochondrion. N6-acetyllysine is present on residues K125, K138, K142, and K144. K150 is subject to N6-acetyllysine; alternate. Residue K150 is modified to N6-succinyllysine; alternate. K150 participates in a covalent cross-link: Glycyl lysine isopeptide (Lys-Gly) (interchain with G-Cter in ubiquitin). Position 162 is an N6-succinyllysine (K162). An N6-acetyllysine mark is found at K163 and K173. Position 178 is an N6-acetyllysine; alternate (K178). K178 carries the post-translational modification N6-succinyllysine; alternate. K185 is modified (N6-acetyllysine).

The protein belongs to the bacterial ribosomal protein bL12 family. In terms of assembly, component of the mitochondrial large ribosomal subunit (mt-LSU). Mature mammalian 55S mitochondrial ribosomes consist of a small (28S) and a large (39S) subunit. The 28S small subunit contains a 12S ribosomal RNA (12S mt-rRNA) and 30 different proteins. The 39S large subunit contains a 16S rRNA (16S mt-rRNA), a copy of mitochondrial valine transfer RNA (mt-tRNA(Val)), which plays an integral structural role, and 52 different proteins. bL12m interacts with NOA1. Two mature forms are produced by differential two-step proteolytic cleavage. Cleaved by the mitochondrial processing protease to produce the long mature form and subsequently by the mitochondrial intermediate protease to produce the short mature form. Post-translationally, in the presence of CUL3, undergoes 'Lys-63'-linked ubiquitination at Lys-150 which results in proteasomal degradation.

The protein resides in the mitochondrion matrix. Its function is as follows. As a component of the mitochondrial large ribosomal subunit, plays a role in mitochondrial translation. When present in mitochondria as a free protein not associated with the ribosome, associates with mitochondrial RNA polymerase POLRMT to activate transcription. Required for POLRMT stability. In Homo sapiens (Human), this protein is Large ribosomal subunit protein bL12m (MRPL12).